Reading from the N-terminus, the 577-residue chain is Aspartate--tRNA(Asp/Asn) ligase (577 aa).

Glutamate 171 contacts L-aspartate. The segment at 195–198 is aspartate; it reads QLFK. Arginine 217 lines the L-aspartate pocket. ATP-binding positions include 217 to 219 and glutamine 226; that span reads RDE. Histidine 444 lines the L-aspartate pocket. Glutamate 474 serves as a coordination point for ATP. Arginine 481 is a binding site for L-aspartate. 526 to 529 is a binding site for ATP; that stretch reads GFDR.

The protein belongs to the class-II aminoacyl-tRNA synthetase family. Type 1 subfamily. Homodimer.

Its subcellular location is the cytoplasm. It carries out the reaction tRNA(Asx) + L-aspartate + ATP = L-aspartyl-tRNA(Asx) + AMP + diphosphate. Aspartyl-tRNA synthetase with relaxed tRNA specificity since it is able to aspartylate not only its cognate tRNA(Asp) but also tRNA(Asn). Reaction proceeds in two steps: L-aspartate is first activated by ATP to form Asp-AMP and then transferred to the acceptor end of tRNA(Asp/Asn). This chain is Aspartate--tRNA(Asp/Asn) ligase, found in Helicobacter pylori (strain G27).